The primary structure comprises 278 residues: Large ribosomal subunit protein uL2 (278 aa).

Disordered regions lie at residues 32 to 54 and 221 to 278; these read SLCR…TRHI and RGMT…RNAK. The span at 232–245 shows a compositional bias: gly residues; that stretch reads NGGGEGKSKSGGGR.

This sequence belongs to the universal ribosomal protein uL2 family. In terms of assembly, part of the 50S ribosomal subunit. Forms a bridge to the 30S subunit in the 70S ribosome.

Its function is as follows. One of the primary rRNA binding proteins. Required for association of the 30S and 50S subunits to form the 70S ribosome, for tRNA binding and peptide bond formation. It has been suggested to have peptidyltransferase activity; this is somewhat controversial. Makes several contacts with the 16S rRNA in the 70S ribosome. This chain is Large ribosomal subunit protein uL2, found in Akkermansia muciniphila (strain ATCC BAA-835 / DSM 22959 / JCM 33894 / BCRC 81048 / CCUG 64013 / CIP 107961 / Muc).